Reading from the N-terminus, the 1299-residue chain is DNA-directed RNA polymerase subunit beta' (1299 aa).

Zn(2+)-binding residues include cysteine 60, cysteine 62, cysteine 75, and cysteine 78. Residues 385-405 (GRRGRPVTGPGNRPLKSLSDM) are disordered. Mg(2+)-binding residues include aspartate 535, aspartate 537, and aspartate 539. Zn(2+) contacts are provided by cysteine 886, cysteine 962, cysteine 969, and cysteine 972.

This sequence belongs to the RNA polymerase beta' chain family. The RNAP catalytic core consists of 2 alpha, 1 beta, 1 beta' and 1 omega subunit. When a sigma factor is associated with the core the holoenzyme is formed, which can initiate transcription. It depends on Mg(2+) as a cofactor. Zn(2+) serves as cofactor.

It catalyses the reaction RNA(n) + a ribonucleoside 5'-triphosphate = RNA(n+1) + diphosphate. Functionally, DNA-dependent RNA polymerase catalyzes the transcription of DNA into RNA using the four ribonucleoside triphosphates as substrates. The chain is DNA-directed RNA polymerase subunit beta' from Streptomyces avermitilis (strain ATCC 31267 / DSM 46492 / JCM 5070 / NBRC 14893 / NCIMB 12804 / NRRL 8165 / MA-4680).